The following is a 571-amino-acid chain: MSTNTTHTSCPKESREDRAFQKTYAEGTLWPVKVGMQTLNLSGTYSCNGVPFSSLPLYDTSGPHSDPSLQVNPAEGLAPVRDSWNFIKSISVPCAAPVNTESMTERHPRMAEDGIALTQMHFARKGVITPEMEYVAIRENQQLEEWIRANGRGGTPSEPITAEFVMSEVAAGRAIIPANINHPELEPMIIGRNFRVKINANIGNSALSSSIAEEVEKAVWACRWGADTVMDLSTGANIHKTREWILRNSPVPIGTVPIYQALEKVNGVAENLTWELYRDTLLEQAEQGVDYFTIHAGILEKHLPLADKRRTGIVSRGGSIMAKWCRANKQENFLYTHFEEICAILKCYDIAVSLGDALRPGSISDANDEAQFGELKVLGELTTLAWKHEVQVMIEGPGHVPLNMIEENMQKQLEYCHEAPFYTLGPLVTDIAAGYDHVNSAIGGTLIASYGCSMLCYVTPKEHLGLPDRNDVREGVVVHKIAAHAADLAKGSPIARLRDELMSSARFAFNWEDQFNLSLDPPKTREVHAASMKAAGHEGEKADFCTMCGPDFCSMKKSKEASAASAIEPGR.

Substrate contacts are provided by residues asparagine 201, methionine 230, tyrosine 259, histidine 295, 315 to 317 (SRG), 356 to 359 (DALR), and glutamate 395. Histidine 399 contributes to the Zn(2+) binding site. Tyrosine 422 contacts substrate. Histidine 463 provides a ligand contact to Zn(2+). The [4Fe-4S] cluster site is built by cysteine 545, cysteine 548, and cysteine 553.

It belongs to the ThiC family. Requires [4Fe-4S] cluster as cofactor.

It carries out the reaction 5-amino-1-(5-phospho-beta-D-ribosyl)imidazole + S-adenosyl-L-methionine = 4-amino-2-methyl-5-(phosphooxymethyl)pyrimidine + CO + 5'-deoxyadenosine + formate + L-methionine + 3 H(+). It functions in the pathway cofactor biosynthesis; thiamine diphosphate biosynthesis. Functionally, catalyzes the synthesis of the hydroxymethylpyrimidine phosphate (HMP-P) moiety of thiamine from aminoimidazole ribotide (AIR) in a radical S-adenosyl-L-methionine (SAM)-dependent reaction. In Chlorobium phaeovibrioides (strain DSM 265 / 1930) (Prosthecochloris vibrioformis (strain DSM 265)), this protein is Phosphomethylpyrimidine synthase.